We begin with the raw amino-acid sequence, 220 residues long: Ribose-5-phosphate isomerase A (220 aa).

Residues 25–28 (TGST), 80–83 (DGAD), and 93–96 (KGGG) contribute to the substrate site. Residue E102 is the Proton acceptor of the active site. K120 contacts substrate.

The protein belongs to the ribose 5-phosphate isomerase family. Homodimer.

It carries out the reaction aldehydo-D-ribose 5-phosphate = D-ribulose 5-phosphate. Its pathway is carbohydrate degradation; pentose phosphate pathway; D-ribose 5-phosphate from D-ribulose 5-phosphate (non-oxidative stage): step 1/1. Its function is as follows. Catalyzes the reversible conversion of ribose-5-phosphate to ribulose 5-phosphate. In Bacillus thuringiensis subsp. konkukian (strain 97-27), this protein is Ribose-5-phosphate isomerase A.